The sequence spans 790 residues: Tumor necrosis factor alpha-induced protein 3 (790 aa).

Alanine 2 carries the N-acetylalanine modification. A TRAF-binding region spans residues 58-300 (PQFREIIHKA…LTDPENEMKE (243 aa)). The OTU domain occupies 92 to 263 (LVALKTNGDG…SHHFVPLVTL (172 aa)). Aspartate 100 is an active-site residue. The Nucleophile role is filled by cysteine 103. 3 interaction with ubiquitin regions span residues 157 to 159 (LCY), 190 to 192 (SLE), and 224 to 227 (FAPL). Residue histidine 256 is the Proton acceptor of the active site. The interval 369–775 (AQNPMESSLP…ACDHFGNAKC (407 aa)) is interaction with TNIP1. The A20-type 1 zinc finger occupies 381–416 (SLMDVKCETPNCPFFMSVNTQPLCHECSERRQKNQN). The segment at 386-453 (KCETPNCPFF…EPLAWNPEEP (68 aa)) is interaction with RIPK1. Cysteine 387, cysteine 392, cysteine 404, and cysteine 407 together coordinate Zn(2+). Positions 415-467 (QNKLPKLNSKPGPEGLPGMALGASRGEAYEPLAWNPEEPTGGPHSAPPTAPSP) are disordered. A Phosphoserine modification is found at serine 459. 2 consecutive A20-type zinc fingers follow at residues 472–507 (ETTA…LHAS) and 515–548 (HLDP…AEAS). Residues cysteine 478, cysteine 483, cysteine 495, cysteine 498, cysteine 521, cysteine 524, cysteine 536, and cysteine 539 each contribute to the Zn(2+) site. Residues 550 to 580 (SLSTSLPPSCHQRSKSDPSQLVRSPSPHSCH) form a disordered region. Residues 566 to 576 (DPSQLVRSPSP) are compositionally biased toward polar residues. Serine 575 carries the post-translational modification Phosphoserine. An A20-type 4 zinc finger spans residues 601–636 (RTGTSKCRKAGCMYFGTPENKGFCTLCFIEYRENKH). Residues 605-655 (SKCRKAGCMYFGTPENKGFCTLCFIEYRENKHLVAASGKASPTASRFQNTI) are required for proteasomal degradation of UBE2N and UBE2D3, TRAF6 deubiquitination, and TAX1BP1 interaction with UBE2N. Positions 606–790 (KCRKAGCMYF…ECFQFKQMYG (185 aa)) are sufficient for inhibitory activity of TNF-induced NF-kappa-B activity. Zn(2+) is bound by residues cysteine 607, cysteine 612, cysteine 624, and cysteine 627. Position 645 is a phosphoserine (serine 645). The A20-type 5 zinc-finger motif lies at 651–686 (FQNTIPCLGRECGTLGSTMFEGYCQKCFIEAQNQRF). Residues cysteine 657, cysteine 662, cysteine 674, and cysteine 677 each coordinate Zn(2+). The segment covering 689–705 (AKRTEEQLRSSQRRDVP) has biased composition (basic and acidic residues). Residues 689-712 (AKRTEEQLRSSQRRDVPRTTQSTS) form a disordered region. Residues 697 to 790 (RSSQRRDVPR…ECFQFKQMYG (94 aa)) form a required for lysosomal localization and for TRAF2 lysosomal degradation region. 2 A20-type zinc fingers span residues 710–745 (STSR…RMGP) and 756–790 (DPPK…QMYG). Zn(2+) contacts are provided by cysteine 716, cysteine 721, cysteine 733, cysteine 736, cysteine 762, cysteine 767, cysteine 779, and cysteine 782.

It belongs to the peptidase C64 family. In terms of assembly, homodimer. Interacts with TNIP1, TAX1BP1 and TRAF2. Interacts with RNF11, ITCH and TAX1BP1 only after TNF stimulation; these interaction are transient and they are lost after 1 hour of stimulation with TNF. Interacts with YWHAZ and YWHAH. Interacts with IKBKG; the interaction is induced by TNF stimulation and by polyubiquitin. Interacts with RIPK1. Interacts with UBE2N; the interaction requires TAX1BP1. Interacts with TRAF6. Post-translationally, proteolytically cleaved by MALT1 upon TCR stimulation; disrupts NF-kappa-B inhibitory function and results in increased IL-2 production. It is proposed that only a fraction of TNFAIP3 colocalized with TCR and CBM complex is cleaved, leaving the main TNFAIP3 pool intact.

The protein resides in the cytoplasm. It is found in the nucleus. It localises to the lysosome. It catalyses the reaction Thiol-dependent hydrolysis of ester, thioester, amide, peptide and isopeptide bonds formed by the C-terminal Gly of ubiquitin (a 76-residue protein attached to proteins as an intracellular targeting signal).. Its function is as follows. Ubiquitin-editing enzyme that contains both ubiquitin ligase and deubiquitinase activities. Involved in immune and inflammatory responses signaled by cytokines, such as TNF-alpha and IL-1 beta, or pathogens via Toll-like receptors (TLRs) through terminating NF-kappa-B activity. Essential component of a ubiquitin-editing protein complex, comprising also RNF11, ITCH and TAX1BP1, that ensures the transient nature of inflammatory signaling pathways. In cooperation with TAX1BP1 promotes disassembly of E2-E3 ubiquitin protein ligase complexes in IL-1R and TNFR-1 pathways; affected are at least E3 ligases TRAF6, TRAF2 and BIRC2, and E2 ubiquitin-conjugating enzymes UBE2N and UBE2D3. In cooperation with TAX1BP1 promotes ubiquitination of UBE2N and proteasomal degradation of UBE2N and UBE2D3. Upon TNF stimulation, deubiquitinates 'Lys-63'-polyubiquitin chains on RIPK1 and catalyzes the formation of 'Lys-48'-polyubiquitin chains. This leads to RIPK1 proteasomal degradation and consequently termination of the TNF- or LPS-mediated activation of NF-kappa-B. Deubiquitinates TRAF6 probably acting on 'Lys-63'-linked polyubiquitin. Upon T-cell receptor (TCR)-mediated T-cell activation, deubiquitinates 'Lys-63'-polyubiquitin chains on MALT1 thereby mediating disassociation of the CBM (CARD11:BCL10:MALT1) and IKK complexes and preventing sustained IKK activation. Deubiquitinates NEMO/IKBKG; the function is facilitated by TNIP1 and leads to inhibition of NF-kappa-B activation. Upon stimulation by bacterial peptidoglycans, probably deubiquitinates RIPK2. Can also inhibit I-kappa-B-kinase (IKK) through a non-catalytic mechanism which involves polyubiquitin; polyubiquitin promotes association with IKBKG and prevents IKK MAP3K7-mediated phosphorylation. Targets TRAF2 for lysosomal degradation. In vitro able to deubiquitinate 'Lys-11'-, 'Lys-48'- and 'Lys-63' polyubiquitin chains. Inhibitor of programmed cell death. Has a role in the function of the lymphoid system. Required for LPS-induced production of pro-inflammatory cytokines and IFN beta in LPS-tolerized macrophages. The polypeptide is Tumor necrosis factor alpha-induced protein 3 (TNFAIP3) (Macaca fascicularis (Crab-eating macaque)).